The chain runs to 288 residues: UPF0494 membrane protein C212.04c (288 aa).

4 helical membrane-spanning segments follow: residues Trp107–Ile127, Ile144–Tyr164, Pro174–Ile194, and Ile198–Ala218.

It belongs to the UPF0494 family.

It is found in the cytoplasm. It localises to the endoplasmic reticulum. The protein resides in the membrane. The polypeptide is UPF0494 membrane protein C212.04c (Schizosaccharomyces pombe (strain 972 / ATCC 24843) (Fission yeast)).